A 130-amino-acid polypeptide reads, in one-letter code: Histone H2A type 2 (130 aa).

The interval 1–22 (MSGRGKQGGKTRAKSKTRSSRA) is disordered. Residue S2 is modified to N-acetylserine. A Phosphoserine modification is found at S2. K6 is subject to N6-(2-hydroxyisobutyryl)lysine. K6 is subject to N6-acetyllysine. The span at 7–19 (QGGKTRAKSKTRS) shows a compositional bias: basic residues. N6-(2-hydroxyisobutyryl)lysine; alternate is present on K10. The residue at position 10 (K10) is an N6-lactoyllysine; alternate. At K10 the chain carries N6-succinyllysine. Residues K14 and K16 each participate in a glycyl lysine isopeptide (Lys-Gly) (interchain with G-Cter in ubiquitin) cross-link. At K37 the chain carries N6-(2-hydroxyisobutyryl)lysine; alternate. K76 carries the N6-(2-hydroxyisobutyryl)lysine modification. K96 is subject to N6-(2-hydroxyisobutyryl)lysine; alternate. K96 carries the N6-succinyllysine modification. At K96 the chain carries N6-glutaryllysine; alternate. Q105 is modified (N5-methylglutamine). Residue K119 is modified to N6-(2-hydroxyisobutyryl)lysine; alternate. N6-glutaryllysine; alternate is present on K119. K120 participates in a covalent cross-link: Glycyl lysine isopeptide (Lys-Gly) (interchain with G-Cter in ubiquitin).

It belongs to the histone H2A family. The nucleosome is a histone octamer containing two molecules each of H2A, H2B, H3 and H4 assembled in one H3-H4 heterotetramer and two H2A-H2B heterodimers. The octamer wraps approximately 147 bp of DNA. Post-translationally, monoubiquitination of Lys-120 (H2AK119Ub) gives a specific tag for epigenetic transcriptional repression. Following DNA double-strand breaks (DSBs), it is ubiquitinated through 'Lys-63' linkage of ubiquitin moieties, leading to the recruitment of repair proteins to sites of DNA damage. H2AK119Ub and ionizing radiation-induced 'Lys-63'-linked ubiquitination are distinct events. In terms of processing, phosphorylation on Ser-2 is enhanced during mitosis. Phosphorylation on Ser-2 directly represses transcription. Glutamine methylation at Gln-105 (H2AQ104me) by FBL is specifically dedicated to polymerase I. It is present at 35S ribosomal DNA locus and impairs binding of the FACT complex.

The protein resides in the nucleus. Its subcellular location is the chromosome. Core component of nucleosome. Nucleosomes wrap and compact DNA into chromatin, limiting DNA accessibility to the cellular machineries which require DNA as a template. Histones thereby play a central role in transcription regulation, DNA repair, DNA replication and chromosomal stability. DNA accessibility is regulated via a complex set of post-translational modifications of histones, also called histone code, and nucleosome remodeling. The polypeptide is Histone H2A type 2 (Xenopus laevis (African clawed frog)).